The sequence spans 346 residues: Zinc-type alcohol dehydrogenase-like protein C1773.06c (346 aa).

Belongs to the zinc-containing alcohol dehydrogenase family. Quinone oxidoreductase subfamily.

It localises to the cytoplasm. The chain is Zinc-type alcohol dehydrogenase-like protein C1773.06c from Schizosaccharomyces pombe (strain 972 / ATCC 24843) (Fission yeast).